A 76-amino-acid polypeptide reads, in one-letter code: MKVLSLIFVIFSVLVLFASAKDPVCDQPKAVGRCFAAFPKFYYNSSSGQCQAFIYGGCGGNENNFNTLEECNAKCA.

The first 20 residues, 1–20 (MKVLSLIFVIFSVLVLFASA), serve as a signal peptide directing secretion. The 51-residue stretch at 25-75 (CDQPKAVGRCFAAFPKFYYNSSSGQCQAFIYGGCGGNENNFNTLEECNAKC) folds into the BPTI/Kunitz inhibitor domain. Intrachain disulfides connect Cys25–Cys75, Cys34–Cys58, and Cys50–Cys71.

Expressed in salivary glands.

The protein localises to the secreted. In terms of biological role, potent anticoagulant protein that inhibits the hydrolytic activities of all serine proteases tested (trypsin, thrombin, elastase, and chymotrypsin), with the highest efficacy on thrombin. The chain is Tabkunin 2 from Tabanus yao (Horsefly).